Reading from the N-terminus, the 180-residue chain is UPF0227 protein YcfP (180 aa).

Belongs to the UPF0227 family.

This chain is UPF0227 protein YcfP, found in Escherichia coli O139:H28 (strain E24377A / ETEC).